The chain runs to 686 residues: Leucine-rich repeat-containing protein 49 (686 aa).

LRR repeat units follow at residues 113–134 (HLRLLNFQHNFITRIQNISNLQ), 135–156 (KLISLDLYDNQIEEISGLSTLR), 157–178 (CLRVLLLGKNRIKKISNLENLK), 179–200 (SLDVLDLHGNQITKIENINHLC), 201–222 (ELRVLNLARNFLSHVDNLNGLD), 223–244 (SLTELNLRHNQITFVRDVDNLP), and 245–266 (CLQHLFLSFNNISSFDSVSCLA). An LRRCT domain is found at 279-317 (NPIAQESWYKHTVLQNMMQLRQLDMKRITEEERRMASVL). Residues 303 to 341 (MKRITEEERRMASVLAKKEEEKKRESHKQSLLKEKKRLT) adopt a coiled-coil conformation. A disordered region spans residues 360–388 (ATNEDRKDSDSPQDPCQIDGSTLSAFPEE).

As to quaternary structure, part of the neuronal tubulin polyglutamylase complex which contains TPGS1, TPGS2, TTLL1, LRRC49 and NICN1. Interacts with PCM1; TTLL1, TPGS1, TPGS2 and LRRC49.

It localises to the cytoplasm. It is found in the cytoskeleton. The protein localises to the microtubule organizing center. Its subcellular location is the centrosome. The protein resides in the centriolar satellite. Its function is as follows. Subunit of the tubulin polyglutamylase complex (TPGC). The complex mediates cilia and flagella polyglutamylation which is essential for their biogenesis and motility. This chain is Leucine-rich repeat-containing protein 49, found in Homo sapiens (Human).